The primary structure comprises 400 residues: MTRVVVIGSGFAGLWAALGAARRLDELAVLAGTVDVMVVSNKPFHDIRVRNYEADLSACRIPLGDVLGPAGVAHVTAEVTAIDADGRRVTTSTGASYSYDRLVLASGSHVVKPALPGLAEFGFDVDTYDGAVRLQQHLQGLAGGPLTSAAATVVVVGAGLTGIETACELPGRLHALFARGDGVTPRVVLIDHNPFVGSDMGLSARPVIEQALLDNGVETRTGVSVAAVSPGGVTLSSGERLAAATVVWCAGMRASRLTEQLPVARDRLGRLQVDDYLRVIGVPAMFAAGDVAAARMDDEHLSVMSCQHGRPMGRYAGCNVINDLFDQPLLALRIPWYVTVLDLGSAGAVYTEGWERKVVSQGAPAKTTKQSINTRRIYPPLNGSRADLLAAAAPRVQPRP.

This sequence belongs to the NADH dehydrogenase family. It depends on FAD as a cofactor.

The protein is NADH dehydrogenase-like protein Rv1812c of Mycobacterium tuberculosis (strain ATCC 25618 / H37Rv).